The chain runs to 132 residues: Evasin P985 (132 aa).

The N-terminal stretch at 1–24 (MHSTIAYVSLLPLALFVAMHGAST) is a signal peptide. N-linked (GlcNAc...) asparagine glycosylation is found at asparagine 45, asparagine 69, asparagine 74, asparagine 103, asparagine 111, and asparagine 117. 4 cysteine pairs are disulfide-bonded: cysteine 48–cysteine 70, cysteine 66–cysteine 109, cysteine 83–cysteine 114, and cysteine 104–cysteine 123.

The protein resides in the secreted. Functionally, salivary chemokine-binding protein which binds to host chemokine CCL5. This Amblyomma parvum (South American tick) protein is Evasin P985.